The chain runs to 655 residues: Broad substrate specificity ATP-binding cassette transporter ABCG2 (655 aa).

At Met1 to Ser395 the chain is on the cytoplasmic side. The 250-residue stretch at Leu36–Pro285 folds into the ABC transporter domain. ATP-binding positions include Gly79 to Ser86, Arg183 to Glu189, Glu210, and His242. The 263-residue stretch at Leu389 to Leu651 folds into the ABC transmembrane type-2 domain. The helical transmembrane segment at Ile396–Leu416 threads the bilayer. Topologically, residues Lys417 to Gly428 are extracellular. Residues Val429–Val449 form a helical membrane-spanning segment. Topologically, residues Val450–Asp477 are cytoplasmic. The helical transmembrane segment at Leu478–Gly498 threads the bilayer. Residues Leu499–Phe506 are Extracellular-facing. Residues Phe507–Ile527 traverse the membrane as a helical segment. Residues Ala528 to Ser535 are Cytoplasmic-facing. A helical transmembrane segment spans residues Ile536–Val556. Residues Asn557–His630 are Extracellular-facing. A disulfide bridge connects residues Cys592 and Cys608. Asn596 and Asn600 each carry an N-linked (GlcNAc...) asparagine glycan. The chain crosses the membrane as a helical span at residues Val631 to Leu651. The Cytoplasmic portion of the chain corresponds to Lys652–Ser655.

It belongs to the ABC transporter superfamily. ABCG family. Eye pigment precursor importer (TC 3.A.1.204) subfamily. Homodimer; disulfide-linked. The minimal functional unit is a homodimer, but the major oligomeric form in plasma membrane is a homotetramer with possibility of higher order oligomerization up to homododecamers. In terms of processing, N-glycosylated. Glycosylation-deficient ABCG2 is normally expressed and functional. Phosphorylated. Phosphorylation may regulate the localization to the plasma membrane, the homooligomerization and therefore, the activity of the transporter.

It localises to the cell membrane. The protein resides in the apical cell membrane. It is found in the mitochondrion membrane. It carries out the reaction ATP + H2O + xenobioticSide 1 = ADP + phosphate + xenobioticSide 2.. The enzyme catalyses urate(in) + ATP + H2O = urate(out) + ADP + phosphate + H(+). It catalyses the reaction indoxyl sulfate(in) + ATP + H2O = indoxyl sulfate(out) + ADP + phosphate + H(+). The catalysed reaction is sphing-4-enine 1-phosphate(in) + ATP + H2O = sphing-4-enine 1-phosphate(out) + ADP + phosphate + H(+). It carries out the reaction estrone 3-sulfate(in) + ATP + H2O = estrone 3-sulfate(out) + ADP + phosphate + H(+). The enzyme catalyses dehydroepiandrosterone 3-sulfate(in) + ATP + H2O = dehydroepiandrosterone 3-sulfate(out) + ADP + phosphate + H(+). It catalyses the reaction 4-methylumbelliferone sulfate(in) + ATP + H2O = 4-methylumbelliferone sulfate(out) + ADP + phosphate + H(+). The catalysed reaction is 5,7-dimethyl-2-methylamino-4-(3-pyridylmethyl)-1,3-benzothiazol-6-yl beta-D-glucuronate(in) + ATP + H2O = 5,7-dimethyl-2-methylamino-4-(3-pyridylmethyl)-1,3-benzothiazol-6-yl beta-D-glucuronate(out) + ADP + phosphate + H(+). It carries out the reaction 4-methylumbelliferone beta-D-glucuronate(in) + ATP + H2O = 4-methylumbelliferone beta-D-glucuronate(out) + ADP + phosphate + H(+). The enzyme catalyses 5,7-dimethyl-2-methylamino-4-(3-pyridylmethyl)-1,3-benzothiazol-6-yl sulfate(in) + ATP + H2O = 5,7-dimethyl-2-methylamino-4-(3-pyridylmethyl)-1,3-benzothiazol-6-yl sulfate(out) + ADP + phosphate + H(+). It catalyses the reaction 17beta-estradiol 17-O-(beta-D-glucuronate)(in) + ATP + H2O = 17beta-estradiol 17-O-(beta-D-glucuronate)(out) + ADP + phosphate + H(+). The catalysed reaction is methotrexate(in) + ATP + H2O = methotrexate(out) + ADP + phosphate + H(+). It carries out the reaction riboflavin(in) + ATP + H2O = riboflavin(out) + ADP + phosphate + H(+). The enzyme catalyses pheophorbide a(in) + ATP + H2O = pheophorbide a(out) + ADP + phosphate + H(+). It catalyses the reaction itaconate(in) + ATP + H2O = itaconate(out) + ADP + phosphate + H(+). In terms of biological role, broad substrate specificity ATP-dependent transporter of the ATP-binding cassette (ABC) family that actively extrudes a wide variety of physiological compounds, dietary toxins and xenobiotics from cells. Involved in porphyrin homeostasis, mediating the export of protoporphyrin IX (PPIX) from both mitochondria to cytosol and cytosol to extracellular space, it also functions in the cellular export of heme. Also mediates the efflux of sphingosine-1-P from cells. Acts as a urate exporter functioning in both renal and extrarenal urate excretion. In kidney, it also functions as a physiological exporter of the uremic toxin indoxyl sulfate. Also involved in the excretion of steroids like estrone 3-sulfate/E1S, 3beta-sulfooxy-androst-5-en-17-one/DHEAS, and other sulfate conjugates. Mediates the secretion of the riboflavin and biotin vitamins into milk. Extrudes pheophorbide a, a phototoxic porphyrin catabolite of chlorophyll, reducing its bioavailability. Plays an important role in the exclusion of xenobiotics from the brain. It confers to cells a resistance to multiple drugs and other xenobiotics including mitoxantrone, pheophorbide, camptothecin, methotrexate, azidothymidine, and the anthracyclines daunorubicin and doxorubicin, through the control of their efflux. In placenta, it limits the penetration of drugs from the maternal plasma into the fetus. May play a role in early stem cell self-renewal by blocking differentiation. In inflammatory macrophages, exports itaconate from the cytosol to the extracellular compartment and limits the activation of TFEB-dependent lysosome biogenesis involved in antibacterial innate immune response. The chain is Broad substrate specificity ATP-binding cassette transporter ABCG2 (ABCG2) from Bos taurus (Bovine).